Here is a 142-residue protein sequence, read N- to C-terminus: Relaxin-3 (142 aa).

An N-terminal signal peptide occupies residues 1-25 (MARYKLLLLLAVWVLTGELWPGAEA). 3 cysteine pairs are disulfide-bonded: C35–C129, C47–C142, and C128–C133. A propeptide spans 55 to 118 (SDILAHEAMG…GTPGALRGSR (64 aa)) (connecting peptide).

Belongs to the insulin family. In terms of assembly, heterodimer of a B chain and an A chain linked by two disulfide bonds.

Its subcellular location is the secreted. In terms of biological role, may play a role in neuropeptide signaling processes. Ligand for LGR7, RXFP3 and RXFP4. The sequence is that of Relaxin-3 (RLN3) from Pan troglodytes (Chimpanzee).